Reading from the N-terminus, the 705-residue chain is Elongation factor G (705 aa).

One can recognise a tr-type G domain in the interval 8-294 (DRYRNFGIMA…AVIDYLPSPL (287 aa)). Residues 17–24 (AHIDAGKT), 92–96 (DTPGH), and 146–149 (NKMD) contribute to the GTP site.

It belongs to the TRAFAC class translation factor GTPase superfamily. Classic translation factor GTPase family. EF-G/EF-2 subfamily.

It localises to the cytoplasm. Catalyzes the GTP-dependent ribosomal translocation step during translation elongation. During this step, the ribosome changes from the pre-translocational (PRE) to the post-translocational (POST) state as the newly formed A-site-bound peptidyl-tRNA and P-site-bound deacylated tRNA move to the P and E sites, respectively. Catalyzes the coordinated movement of the two tRNA molecules, the mRNA and conformational changes in the ribosome. The protein is Elongation factor G of Dinoroseobacter shibae (strain DSM 16493 / NCIMB 14021 / DFL 12).